A 488-amino-acid chain; its full sequence is HSPB1-associated protein 1 (488 aa).

The interval 88–208 (ETTCNYVEAT…EDTPFLYPTR (121 aa)) is interaction with HSPB1. Residues 124 to 288 (WAYADYKYFV…HLARVEEAIT (165 aa)) form the JmjC domain. A compositionally biased stretch (polar residues) spans 369-379 (QTGSQNLTTGT). The tract at residues 369–415 (QTGSQNLTTGTDKPEAASPFGPDLVPVAQRSEEPPSERGGIFGSDGK) is disordered.

Interacts with CRYAB and HSPB1. Widely expressed.

It is found in the cytoplasm. Functionally, may play a role in cellular stress response. The protein is HSPB1-associated protein 1 (HSPBAP1) of Homo sapiens (Human).